Consider the following 1083-residue polypeptide: Kinesin-like protein klp-19 (1083 aa).

Residues serine 6 to isoleucine 328 form the Kinesin motor domain. Glycine 85–threonine 92 is an ATP binding site. Positions methionine 408–threonine 435 form a coiled coil. The segment covering threonine 458 to glutamate 471 has biased composition (acidic residues). The disordered stretch occupies residues threonine 458–aspartate 479. A coiled-coil region spans residues leucine 487–aspartate 650. Over residues aspartate 1044–phenylalanine 1055 the composition is skewed to polar residues. Positions aspartate 1044–leucine 1083 are disordered.

This sequence belongs to the TRAFAC class myosin-kinesin ATPase superfamily. Kinesin family. Expressed in the gonad.

The protein localises to the nucleus. It localises to the nucleoplasm. Its subcellular location is the cytoplasm. The protein resides in the cytoskeleton. It is found in the spindle. The protein localises to the chromosome. Its function is as follows. Required for chromosome movement and orientation on spindle poles in mitosis and meiosis. May play a role in early anterior-posterior chromosome movement in mitotic embryos. This is Kinesin-like protein klp-19 from Caenorhabditis elegans.